The chain runs to 239 residues: Ribosomal RNA small subunit methyltransferase G (239 aa).

Residues Gly78, Phe83, 129–130 (AE), and Arg148 each bind S-adenosyl-L-methionine.

Belongs to the methyltransferase superfamily. RNA methyltransferase RsmG family.

The protein localises to the cytoplasm. Its function is as follows. Specifically methylates the N7 position of a guanine in 16S rRNA. The polypeptide is Ribosomal RNA small subunit methyltransferase G (Clostridium perfringens (strain SM101 / Type A)).